A 150-amino-acid chain; its full sequence is Cytochrome c oxidase subunit 5A, mitochondrial (150 aa).

Residues 1–41 constitute a mitochondrion transit peptide; it reads MLGAALRRCAVAATTWAGPRGLLHSARTPGPAAAIQSVRCY. An SIFI-degron motif is present at residues 2 to 20; sequence LGAALRRCAVAATTWAGPR. Lys87 and Lys113 each carry N6-acetyllysine. At Thr141 the chain carries Phosphothreonine.

It belongs to the cytochrome c oxidase subunit 5A family. Component of the cytochrome c oxidase (complex IV, CIV), a multisubunit enzyme composed of 14 subunits. The complex is composed of a catalytic core of 3 subunits MT-CO1, MT-CO2 and MT-CO3, encoded in the mitochondrial DNA, and 11 supernumerary subunits COX4I, COX5A, COX5B, COX6A, COX6B, COX6C, COX7A, COX7B, COX7C, COX8 and NDUFA4, which are encoded in the nuclear genome. The complex exists as a monomer or a dimer and forms supercomplexes (SCs) in the inner mitochondrial membrane with NADH-ubiquinone oxidoreductase (complex I, CI) and ubiquinol-cytochrome c oxidoreductase (cytochrome b-c1 complex, complex III, CIII), resulting in different assemblies (supercomplex SCI(1)III(2)IV(1) and megacomplex MCI(2)III(2)IV(2)). Interacts with AFG1L. Interacts with RAB5IF. Post-translationally, in response to mitochondrial stress, the precursor protein is ubiquitinated by the SIFI complex in the cytoplasm before mitochondrial import, leading to its degradation. Within the SIFI complex, UBR4 initiates ubiquitin chain that are further elongated or branched by KCMF1.

Its subcellular location is the mitochondrion inner membrane. The protein operates within energy metabolism; oxidative phosphorylation. Functionally, component of the cytochrome c oxidase, the last enzyme in the mitochondrial electron transport chain which drives oxidative phosphorylation. The respiratory chain contains 3 multisubunit complexes succinate dehydrogenase (complex II, CII), ubiquinol-cytochrome c oxidoreductase (cytochrome b-c1 complex, complex III, CIII) and cytochrome c oxidase (complex IV, CIV), that cooperate to transfer electrons derived from NADH and succinate to molecular oxygen, creating an electrochemical gradient over the inner membrane that drives transmembrane transport and the ATP synthase. Cytochrome c oxidase is the component of the respiratory chain that catalyzes the reduction of oxygen to water. Electrons originating from reduced cytochrome c in the intermembrane space (IMS) are transferred via the dinuclear copper A center (CU(A)) of subunit 2 and heme A of subunit 1 to the active site in subunit 1, a binuclear center (BNC) formed by heme A3 and copper B (CU(B)). The BNC reduces molecular oxygen to 2 water molecules using 4 electrons from cytochrome c in the IMS and 4 protons from the mitochondrial matrix. This is Cytochrome c oxidase subunit 5A, mitochondrial (COX5A) from Macaca mulatta (Rhesus macaque).